A 466-amino-acid polypeptide reads, in one-letter code: Argininosuccinate lyase (466 aa).

This sequence belongs to the lyase 1 family. Argininosuccinate lyase subfamily.

It localises to the cytoplasm. It carries out the reaction 2-(N(omega)-L-arginino)succinate = fumarate + L-arginine. It participates in amino-acid biosynthesis; L-arginine biosynthesis; L-arginine from L-ornithine and carbamoyl phosphate: step 3/3. In Roseobacter denitrificans (strain ATCC 33942 / OCh 114) (Erythrobacter sp. (strain OCh 114)), this protein is Argininosuccinate lyase.